The following is a 63-amino-acid chain: Large ribosomal subunit protein uL29 (63 aa).

The protein belongs to the universal ribosomal protein uL29 family.

In Shigella flexneri, this protein is Large ribosomal subunit protein uL29.